Here is a 41-residue protein sequence, read N- to C-terminus: Alpha-conotoxin TxIB (41 aa).

Positions 1–20 (FDGRNTSANNKATDLMALPV) are excised as a propeptide. Disulfide bonds link C23–C29 and C24–C37. The ser-Xaa-Pro motif, crucial for potent interaction with nAChR stretch occupies residues 25–27 (SDP). C37 bears the Cysteine amide; in Alpha-conotoxin TxIB mark. The propeptide occupies 39-41 (GRR).

Belongs to the conotoxin A superfamily. As to expression, expressed by the venom duct.

Its subcellular location is the secreted. Functionally, alpha-conotoxins act on postsynaptic membranes, they bind to the nicotinic acetylcholine receptors (nAChR) and thus inhibit them. This conotoxin is a subtype-specific blocker of alpha-6/alpha-3-beta-2-beta-3 (CHRNA6/CHRNA3-CHRNB2-CHRNB3) nAChRs nicotinic acetylcholine receptors (nAChRs) (IC(50)=28.4 nM). In Conus textile (Cloth-of-gold cone), this protein is Alpha-conotoxin TxIB.